A 345-amino-acid chain; its full sequence is Transcription factor 19 (345 aa).

Residues 31-88 (YRLGHRADLCDVALRPQQEPGLISGIHAELHAEPRGDDWRVSLEDHSSQGTLVNNVRL) form the FHA domain. A Phosphoserine modification is found at serine 78. Disordered stretches follow at residues 147-167 (AGFR…STLS) and 190-227 (LTFS…RKSV). A PHD-type zinc finger spans residues 293–342 (AAPCCCLPQEETVAWVQCDGCDVWFHVACVGCSIQAAREADFRCPGCRAG). Zn(2+) contacts are provided by cysteine 296, cysteine 298, cysteine 310, cysteine 313, histidine 318, cysteine 321, cysteine 336, and cysteine 339.

The protein localises to the nucleus. Potential transcription factor that may play a role in the regulation of genes involved in cell cycle G1/S transition. May bind to regulatory elements of genes, including the promoter of the transcription factor FOXO1. This chain is Transcription factor 19 (TCF19), found in Pan troglodytes (Chimpanzee).